We begin with the raw amino-acid sequence, 592 residues long: Aspartate--tRNA ligase (592 aa).

E171 contributes to the L-aspartate binding site. The tract at residues Q195–K198 is aspartate. L-aspartate is bound at residue R217. Residues R217–E219 and Q226 contribute to the ATP site. Residue H448 participates in L-aspartate binding. ATP is bound at residue E482. R489 contacts L-aspartate. G534–R537 is an ATP binding site.

It belongs to the class-II aminoacyl-tRNA synthetase family. Type 1 subfamily. As to quaternary structure, homodimer.

It localises to the cytoplasm. It carries out the reaction tRNA(Asp) + L-aspartate + ATP = L-aspartyl-tRNA(Asp) + AMP + diphosphate. Functionally, catalyzes the attachment of L-aspartate to tRNA(Asp) in a two-step reaction: L-aspartate is first activated by ATP to form Asp-AMP and then transferred to the acceptor end of tRNA(Asp). The chain is Aspartate--tRNA ligase from Vibrio parahaemolyticus serotype O3:K6 (strain RIMD 2210633).